Consider the following 332-residue polypeptide: 4-hydroxy-3-methylbut-2-enyl diphosphate reductase (332 aa).

[4Fe-4S] cluster is bound at residue cysteine 34. Residues histidine 63 and histidine 96 each contribute to the (2E)-4-hydroxy-3-methylbut-2-enyl diphosphate site. Dimethylallyl diphosphate contacts are provided by histidine 63 and histidine 96. Residues histidine 63 and histidine 96 each coordinate isopentenyl diphosphate. Cysteine 118 provides a ligand contact to [4Fe-4S] cluster. Residue histidine 146 coordinates (2E)-4-hydroxy-3-methylbut-2-enyl diphosphate. Histidine 146 lines the dimethylallyl diphosphate pocket. Residue histidine 146 participates in isopentenyl diphosphate binding. Catalysis depends on glutamate 148, which acts as the Proton donor. Residue threonine 186 participates in (2E)-4-hydroxy-3-methylbut-2-enyl diphosphate binding. Cysteine 216 lines the [4Fe-4S] cluster pocket. 4 residues coordinate (2E)-4-hydroxy-3-methylbut-2-enyl diphosphate: serine 244, serine 245, asparagine 246, and serine 289. The dimethylallyl diphosphate site is built by serine 244, serine 245, asparagine 246, and serine 289. Isopentenyl diphosphate is bound by residues serine 244, serine 245, asparagine 246, and serine 289.

The protein belongs to the IspH family. The cofactor is [4Fe-4S] cluster.

The enzyme catalyses isopentenyl diphosphate + 2 oxidized [2Fe-2S]-[ferredoxin] + H2O = (2E)-4-hydroxy-3-methylbut-2-enyl diphosphate + 2 reduced [2Fe-2S]-[ferredoxin] + 2 H(+). The catalysed reaction is dimethylallyl diphosphate + 2 oxidized [2Fe-2S]-[ferredoxin] + H2O = (2E)-4-hydroxy-3-methylbut-2-enyl diphosphate + 2 reduced [2Fe-2S]-[ferredoxin] + 2 H(+). It participates in isoprenoid biosynthesis; dimethylallyl diphosphate biosynthesis; dimethylallyl diphosphate from (2E)-4-hydroxy-3-methylbutenyl diphosphate: step 1/1. It functions in the pathway isoprenoid biosynthesis; isopentenyl diphosphate biosynthesis via DXP pathway; isopentenyl diphosphate from 1-deoxy-D-xylulose 5-phosphate: step 6/6. Catalyzes the conversion of 1-hydroxy-2-methyl-2-(E)-butenyl 4-diphosphate (HMBPP) into a mixture of isopentenyl diphosphate (IPP) and dimethylallyl diphosphate (DMAPP). Acts in the terminal step of the DOXP/MEP pathway for isoprenoid precursor biosynthesis. The protein is 4-hydroxy-3-methylbut-2-enyl diphosphate reductase of Mycobacterium leprae (strain TN).